The sequence spans 182 residues: Avenin-E (182 aa).

Residues 21–26 (PFVQQQ) form a 1; approximate repeat. The interval 21–41 (PFVQQQPFVQQQQQPFVQQQQ) is 3 X 7 AA tandem repeats of P-F-V-Q-Q-Q-Q. The 2; approximate repeat unit spans residues 27 to 34 (PFVQQQQQ). The stretch at 35–41 (PFVQQQQ) is repeat 3.

It belongs to the gliadin/glutenin family. Monomer.

It localises to the vacuole. It is found in the aleurone grain. Seed storage protein. Serves as a source of nitrogen, carbon, and sulfur for the young developing seedling. This chain is Avenin-E, found in Avena sativa (Oat).